The primary structure comprises 1469 residues: ABC transporter G family member 36 (1469 aa).

N-acetylmethionine is present on Met1. Phosphoserine occurs at positions 37, 38, and 40. Thr43 bears the Phosphothreonine mark. Ser45 is subject to Phosphoserine. The ABC transporter 1 domain maps to 171–444; it reads LGMIGIQFAK…FESFGFKCPE (274 aa). 204-211 is a binding site for ATP; it reads GPPSSGKT. An ABC transmembrane type-2 1 domain is found at 522 to 735; it reads ELLKSCWDKE…AFNGLVVNEM (214 aa). 7 helical membrane-spanning segments follow: residues 540–560, 575–595, 621–641, 659–679, 685–705, 713–733, and 772–792; these read FFYV…STLF, LYIG…FAEM, LPTF…WMVV, FLLV…IASV, IANT…GFLL, WWGW…LVVN, and ISVG…TLAL. The tract at residues 806–852 is disordered; it reads PEEENEDADQGKDPMRRSLSTADGNRRGEVAMGRMSRDSAAEASGGA. Phosphoserine is present on residues Ser825, Ser841, and Ser844. Positions 829–845 are enriched in basic and acidic residues; it reads GNRRGEVAMGRMSRDSA. One can recognise an ABC transporter 2 domain in the interval 867 to 1119; that stretch reads MSFDDVKYFV…KVVEYFESFP (253 aa). Position 912–919 (912–919) interacts with ATP; that stretch reads GVSGAGKT. The region spanning 1192-1406 is the ABC transmembrane type-2 2 domain; the sequence is GQFKSCLWKQ…TVYGLIVSQY (215 aa). 7 consecutive transmembrane segments (helical) span residues 1216-1236, 1239-1259, 1299-1319, 1326-1346, 1356-1376, 1384-1404, and 1441-1461; these read FIFT…IGGN, NAGD…FVGI, LPYV…MVGF, FFWF…YGMM, VASI…GFFI, WWIW…LIVS, and PVAA…AFCI.

It belongs to the ABC transporter superfamily. ABCG family. PDR (TC 3.A.1.205) subfamily. In terms of assembly, interacts, in a Ca(2+)-dependent manner, with calmodulins CaM3, CaM7 and several CaM-like proteins (CML8, CML9, CML12/CAL4, CML37 and CML38), as well as with calcium regulated proteins CBL4/SOS3 and KIC. Post-translationally, phosphorylated upon perception of pathogen-associated molecular patterns (PAMPs); phosphorylations at Ser-40 and Ser-45, which likely regulate transport activity, are required for plant defense against pathogens (e.g. Blumeria graminis), but dispensable for recruitment to the host-pathogen interface and penetration sites. Phosphorylation at Ser-841 seems to be required for protein stability. Ubiquitous (at protein level). Higher levels in root hairs, stomata, epidermal cells, and hydathodes. Concentrated at the infection site of infected plants, including papillae and haustoria. Accumulates at the periphery of lateral root cap and root epidermal cells, especially in the outer lateral membrane domain facing the environment.

Its subcellular location is the cell membrane. It localises to the golgi apparatus. The protein localises to the trans-Golgi network membrane. The protein resides in the endoplasmic reticulum membrane. Together with ABCG37, regulates auxin homeostasis and responses by playing a dual role in coumarin (e.g. esculin) and in the auxin precursor indole 3-butyric acid (IBA) efflux transport, thus influencing cotyledons, roots and root hairs development. Mediates the transport (export into the apoplast) of distinct indole-type metabolites in distinct biological processes; a precursor of 4-O-beta-D-glucosyl-indol-3-yl formamide (4OGlcI3F), a pathogen-inducible tryptophan-derived compound (e.g. upon Blumeria graminis conidiospore inoculation), being a probable substrate in extracellular pathogen defense. Involved in the cellular detoxification of xenobiotics by promoting the excretion of some auxinic herbicides including 4-(2,4-dichlorophenoxy)butyric acid (2,4-DB) and other members of the phenoxyalkanoic acid family but not 2,4-dichlorophenoxyacetic acid (2,4-D). Mediates thymidine exudation in the rhizosphere. May be a transporter of lignin precursors during tracheary element differentiation. Key factor that controls the extent of cell death in the defense response. Necessary for both callose deposition and glucosinolate activation in response to pathogens. As a central component of nonhost resistance (NHR), required for limiting invasion by nonadapted pathogens including powdery mildews (e.g. Blumeria graminis and Erysiphe pisi), root-penetrating pathogenic fungi (e.g. Fusarium oxysporum), Phakopsora pachyrhizi and Colletotrichum gloeosporioides (anthracnose fungi), probably by sensing Ca(2+) via interactions with calmodulins (e.g. CaM7). Confers resistance to cadmium (Cd) and lead (Pb), probably as an efflux pump of Cd2+ or Cd conjugates, and possibly, of chemicals that mediate pathogen resistance. Promotes resistance to abiotic stresses (e.g. drought and salt stress) and favors general growth by preventing sodium accumulation in plants. Required for microbe-associated molecular patterns (MAMPs)- and salicylic acid (SA)-dependent hypersensitive cell death (HR), involving indole glucosinolate breakdown products (e.g. indole-3-acetonitrile), probably in a PEN2 myrosinase-dependent metabolic pathway, triggered by the recognition of effectors from incompatible pathogens including oomycetes and bacteria (e.g. AvrRpm1 and AvrRps4) and benzothiadiazole- (BTH), and leading to an induced protection against pathogens (e.g. Pseudomonas syringae pv. tomato DC3000, Golovinomyces orontii and Hyaloperonospora arabidopsidis). The sequence is that of ABC transporter G family member 36 from Arabidopsis thaliana (Mouse-ear cress).